The primary structure comprises 297 residues: tRNA-cytidine(32) 2-sulfurtransferase (297 aa).

The PP-loop motif signature appears at 45–50 (SGGKDS). Positions 120, 123, and 211 each coordinate [4Fe-4S] cluster.

Belongs to the TtcA family. Homodimer. The cofactor is Mg(2+). [4Fe-4S] cluster serves as cofactor.

The protein localises to the cytoplasm. The catalysed reaction is cytidine(32) in tRNA + S-sulfanyl-L-cysteinyl-[cysteine desulfurase] + AH2 + ATP = 2-thiocytidine(32) in tRNA + L-cysteinyl-[cysteine desulfurase] + A + AMP + diphosphate + H(+). The protein operates within tRNA modification. In terms of biological role, catalyzes the ATP-dependent 2-thiolation of cytidine in position 32 of tRNA, to form 2-thiocytidine (s(2)C32). The sulfur atoms are provided by the cysteine/cysteine desulfurase (IscS) system. The polypeptide is tRNA-cytidine(32) 2-sulfurtransferase (Vibrio campbellii (strain ATCC BAA-1116)).